Reading from the N-terminus, the 173-residue chain is Protein Rv3753c (173 aa).

The chain is Protein Rv3753c from Mycobacterium tuberculosis (strain ATCC 25618 / H37Rv).